The chain runs to 656 residues: Protein arginine N-methyltransferase 7 (656 aa).

2 consecutive SAM-dependent MTase PRMT-type domains span residues 12 to 338 (EREW…FSIW) and 343 to 656 (GKDS…QSGN).

The protein belongs to the class I-like SAM-binding methyltransferase superfamily. Protein arginine N-methyltransferase family. PRMT7 subfamily.

Its function is as follows. Arginine methyltransferase that can both catalyze the formation of omega-N monomethylarginine (MMA) and symmetrical dimethylarginine (sDMA). This is Protein arginine N-methyltransferase 7 (prmt-7) from Caenorhabditis briggsae.